A 380-amino-acid polypeptide reads, in one-letter code: Cytochrome b (380 aa).

Transmembrane regions (helical) follow at residues 34–54, 78–99, 114–134, and 179–199; these read FGSL…LLAM, WLIR…FLHI, WNTG…GYVL, and FFAL…IHLT. Residues His-84 and His-98 each coordinate heme b. Heme b contacts are provided by His-183 and His-197. His-202 serves as a coordination point for a ubiquinone. The next 4 membrane-spanning stretches (helical) occupy residues 227-247, 289-309, 321-341, and 348-368; these read IKDI…ALFS, LGGV…PFLH, LSQT…WIGS, and FIII…ILFP.

Belongs to the cytochrome b family. The cytochrome bc1 complex contains 11 subunits: 3 respiratory subunits (MT-CYB, CYC1 and UQCRFS1), 2 core proteins (UQCRC1 and UQCRC2) and 6 low-molecular weight proteins (UQCRH/QCR6, UQCRB/QCR7, UQCRQ/QCR8, UQCR10/QCR9, UQCR11/QCR10 and a cleavage product of UQCRFS1). This cytochrome bc1 complex then forms a dimer. It depends on heme b as a cofactor.

Its subcellular location is the mitochondrion inner membrane. In terms of biological role, component of the ubiquinol-cytochrome c reductase complex (complex III or cytochrome b-c1 complex) that is part of the mitochondrial respiratory chain. The b-c1 complex mediates electron transfer from ubiquinol to cytochrome c. Contributes to the generation of a proton gradient across the mitochondrial membrane that is then used for ATP synthesis. The sequence is that of Cytochrome b (MT-CYB) from Coturnix japonica (Japanese quail).